The following is a 102-amino-acid chain: Integration host factor subunit beta (102 aa).

The protein belongs to the bacterial histone-like protein family. In terms of assembly, heterodimer of an alpha and a beta chain.

Its function is as follows. This protein is one of the two subunits of integration host factor, a specific DNA-binding protein that functions in genetic recombination as well as in transcriptional and translational control. This is Integration host factor subunit beta from Marinomonas sp. (strain MWYL1).